Reading from the N-terminus, the 703-residue chain is Stonustoxin subunit alpha (703 aa).

The segment at 2–265 is structural MACPF/CDC pore-forming domain; it reads SSDLVMPALG…KAQQLIQEIN (264 aa). The interval 266–385 is structural FAT domain; that stretch reads VSKVRRIHTT…GMVEGTQAKF (120 aa). The interval 386-517 is thioredoxin (THX) domain; the sequence is VSNQTELDRE…PRMPFVQGYK (132 aa). Positions 508–703 constitute a B30.2/SPRY domain; that stretch reads PRMPFVQGYK…AGNHGTLRLL (196 aa).

This sequence belongs to the SNTX/VTX toxin family. In terms of assembly, heterodimer of alpha and beta subunits; non-covalently linked. Intrachain disulfide bonds may be present in the heterodimer. In terms of processing, not glycosylated. In terms of tissue distribution, expressed by the venom gland.

The protein localises to the secreted. Functionally, this lethal (towards mammals) heterodimer induces hemolytic activities due to its ability to form pores in the cell membrane. The pore may be composed of 10 SNTX-alpha/beta heterodimers. The toxin elicits potent hypotension which is endothelium-dependent and appears to be mediated by the nitric oxide pathway and activation of potassium channels. In addition, it displays edema-inducing activities, increases vascular permeability. It also shows myotoxic activities and interferes irreversibly with neuromuscular function. It also induces irreversible platelet aggregation in rabbit or rat (but not in human or mouse) whole blood. In addition, it has been observed to increase spontaneous quantal acetylcholine release from isolated frog cutaneous pectoris motor endings. The polypeptide is Stonustoxin subunit alpha (Synanceia horrida (Estuarine stonefish)).